A 309-amino-acid chain; its full sequence is Movement protein (309 aa).

A disordered region spans residues 245–273; the sequence is HLSLNESKTLPSTSTTEAEGSERRIHIGA. The segment covering 246-262 has biased composition (polar residues); it reads LSLNESKTLPSTSTTEA.

It is found in the host cell junction. The protein localises to the host plasmodesma. Functionally, transports viral genome to neighboring plant cells directly through plasmosdesmata, without any budding. The movement protein allows efficient cell to cell propagation, by bypassing the host cell wall barrier. Acts by forming a tubular structure at the host plasmodesmata, enlarging it enough to allow free passage of virion capsids. The protein is Movement protein of Solanum lycopersicum (Tomato).